We begin with the raw amino-acid sequence, 265 residues long: Isoprenyl transferase 1 (265 aa).

Residue D43 is part of the active site. D43 is a Mg(2+) binding site. Substrate-binding positions include G44 to R47, W48, H61, and S89 to E91. N92 (proton acceptor) is an active-site residue. Substrate is bound by residues R95, R214, and R220–S222. E233 contributes to the Mg(2+) binding site.

It belongs to the UPP synthase family. As to quaternary structure, homodimer. It depends on Mg(2+) as a cofactor.

Catalyzes the condensation of isopentenyl diphosphate (IPP) with allylic pyrophosphates generating different type of terpenoids. In Corynebacterium diphtheriae (strain ATCC 700971 / NCTC 13129 / Biotype gravis), this protein is Isoprenyl transferase 1.